Reading from the N-terminus, the 185-residue chain is Ribosome-recycling factor (185 aa).

It belongs to the RRF family.

Its subcellular location is the cytoplasm. Functionally, responsible for the release of ribosomes from messenger RNA at the termination of protein biosynthesis. May increase the efficiency of translation by recycling ribosomes from one round of translation to another. This chain is Ribosome-recycling factor, found in Streptomyces avermitilis (strain ATCC 31267 / DSM 46492 / JCM 5070 / NBRC 14893 / NCIMB 12804 / NRRL 8165 / MA-4680).